Here is a 25-residue protein sequence, read N- to C-terminus: Toxin LyeTx 1 (25 aa).

At Leu-25 the chain carries Leucine amide.

Expressed by the venom gland.

It localises to the secreted. Has antimicrobial activity against Gram-positive bacterium S.aureus (MIC=3.79 uM), Gram-negative bacterium E.coli (MIC=7.81 uM) and yeasts C.krusei (MIC=26.3 uM) and C.neoformans (MIC=13.2 uM). Has hemolytic activity against rabbit erythrocytes. Forms pores in lipid bilayers in vitro; pore formation is reduced when cholesterol is present in the bilayers. In Lycosa erythrognatha (Wolf spider), this protein is Toxin LyeTx 1.